The following is a 529-amino-acid chain: Bifunctional purine biosynthesis protein PurH (529 aa).

The MGS-like domain occupies 2–149 (TDLHPVRRAL…KNHAFVNVVV (148 aa)).

This sequence belongs to the PurH family.

It carries out the reaction (6R)-10-formyltetrahydrofolate + 5-amino-1-(5-phospho-beta-D-ribosyl)imidazole-4-carboxamide = 5-formamido-1-(5-phospho-D-ribosyl)imidazole-4-carboxamide + (6S)-5,6,7,8-tetrahydrofolate. It catalyses the reaction IMP + H2O = 5-formamido-1-(5-phospho-D-ribosyl)imidazole-4-carboxamide. The protein operates within purine metabolism; IMP biosynthesis via de novo pathway; 5-formamido-1-(5-phospho-D-ribosyl)imidazole-4-carboxamide from 5-amino-1-(5-phospho-D-ribosyl)imidazole-4-carboxamide (10-formyl THF route): step 1/1. It functions in the pathway purine metabolism; IMP biosynthesis via de novo pathway; IMP from 5-formamido-1-(5-phospho-D-ribosyl)imidazole-4-carboxamide: step 1/1. This chain is Bifunctional purine biosynthesis protein PurH, found in Ruegeria sp. (strain TM1040) (Silicibacter sp.).